The chain runs to 147 residues: Deoxyuridine 5'-triphosphate nucleotidohydrolase (147 aa).

Substrate contacts are provided by residues 67-69, Asn80, and 84-86; these read RSG and LID.

The protein belongs to the dUTPase family. Requires Mg(2+) as cofactor.

It carries out the reaction dUTP + H2O = dUMP + diphosphate + H(+). Its pathway is pyrimidine metabolism; dUMP biosynthesis; dUMP from dCTP (dUTP route): step 2/2. Its function is as follows. This enzyme is involved in nucleotide metabolism: it produces dUMP, the immediate precursor of thymidine nucleotides and it decreases the intracellular concentration of dUTP so that uracil cannot be incorporated into DNA. This chain is Deoxyuridine 5'-triphosphate nucleotidohydrolase, found in Gloeobacter violaceus (strain ATCC 29082 / PCC 7421).